A 470-amino-acid chain; its full sequence is FAD-dependent monooxygenase dpchE (470 aa).

A signal peptide spans 1-24; that stretch reads MSEPHFKVIIVGGSITGLTLAHSL. FAD contacts are provided by glutamate 35, glycine 49, and arginine 108. Asparagine 128 is a glycosylation site (N-linked (GlcNAc...) asparagine). Arginine 193 is a catalytic residue. Aspartate 312 and alanine 325 together coordinate FAD. Residues 447-463 form a helical membrane-spanning segment; that stretch reads WAVVSRSVLLLVGLAIL.

This sequence belongs to the paxM FAD-dependent monooxygenase family. It depends on FAD as a cofactor.

Its subcellular location is the membrane. Its pathway is secondary metabolite biosynthesis; terpenoid biosynthesis. FAD-dependent monooxygenase; part of the gene cluster that mediates the biosynthesis of the diterpenoid pyrones higginsianins A and B. The first step of the pathway is the synthesis of the alpha-pyrone moiety by the polyketide synthase dpchA via condensation of one acetyl-CoA starter unit with 3 malonyl-CoA units and 2 methylations. The alpha-pyrone is then combined with geranylgeranyl pyrophosphate (GGPP) formed by the GGPP synthase dpchD through the action of the prenyltransferase dpchC to yield a linear alpha-pyrone diterpenoid. Subsequent steps in the diterpenoid pyrone biosynthetic pathway involve the decalin core formation, which is initiated by the epoxidation of the C10-C11 olefin by the FAD-dependent oxidoreductase dpchE, and is followed by a cyclization cascade catalyzed by the terpene cyclase dpchB. The short chain dehydrogenase/reductase dpchG then oxidizes the 8S hydroxy group to a ketone and the short chain dehydrogenase/reductase dpchH reduces the ketone to the 8R hydroxy group to yield higginsianin B. Finally, the FAD-dependent oxidoreductase dpchF converts higginsianin B into higginsianin A. The sequence is that of FAD-dependent monooxygenase dpchE from Colletotrichum higginsianum (strain IMI 349063) (Crucifer anthracnose fungus).